The chain runs to 85 residues: Conotoxin Mi15a (85 aa).

An N-terminal signal peptide occupies residues 1 to 23 (MEKLTVLILVATVLLTIQVLGQS). Residues 24-49 (DRDKHLKRRPKQYATKRLSARMRGHR) constitute a propeptide that is removed on maturation. Gln-50 bears the Pyrrolidone carboxylic acid mark.

Belongs to the conotoxin O2 superfamily. In terms of processing, contains 4 disulfide bonds. Expressed by the venom duct.

It localises to the secreted. This is Conotoxin Mi15a from Conus miles (Soldier cone).